Consider the following 184-residue polypeptide: MPQSKSRKIAILGYRSVGKSSLTIQFVEGQFVDSYDPTIENTFTKLITVNGQEYHLQLVDTAGQDEYSIFPQTYSIDINGYILVYSVTSIKSFEVIKVIHGKLLDMVGKVQIPIMLVGNKKDLHMERVISYEEGKALAESWNAAFLESSAKENQTAVDVFRRIILEAEKMDGAASQGKSSCSVM.

A Glycyl lysine isopeptide (Lys-Gly) (interchain with G-Cter in ubiquitin) cross-link involves residue lysine 8. 8 residues coordinate GDP: serine 16, valine 17, glycine 18, lysine 19, serine 20, serine 21, valine 32, and aspartate 33. Position 16 (serine 16) interacts with GTP. GTP-binding residues include glycine 18, lysine 19, serine 20, serine 21, and valine 32. Serine 20 is a Mg(2+) binding site. 4 residues coordinate GTP: tyrosine 35, threonine 38, asparagine 119, and aspartate 122. An Effector region motif is present at residues 35 to 43; it reads YDPTIENTF. Threonine 38 is a Mg(2+) binding site. GDP-binding residues include asparagine 119 and aspartate 122. Serine 130 carries the phosphoserine; by MAPKAPK5 modification. Position 150 (alanine 150) interacts with GDP. Alanine 150 contacts GTP. Cysteine 181 is subject to Cysteine methyl ester. A lipid anchor (S-farnesyl cysteine) is attached at cysteine 181. The propeptide at 182–184 is removed in mature form; that stretch reads SVM.

Belongs to the small GTPase superfamily. Rheb family. As to quaternary structure, associates with the mTORC1 complex (MTOR, MLST8 and RPTOR) in a guanyl nucleotide-independent manner. Interacts with TSC2. Interacts with MCRS1; the interaction maintains RHEB at the lysosome in its active GTP-bound form and prevents its interaction with the mTORC1 complex inhibitor TSC2, ensuring activation of the mTORC1 complex by RHEB. Interacts (when prenylated) with PDE6D; this promotes release from membranes. Farnesylation is important for efficiently activating mTORC1-mediated signaling. Post-translationally, polyubiquitinated in response to amino acid, promoting its interaction with MTOR and mTORC1 activation. Deubiquitination by ATXN3 promotes recruitment of the TSC-TBC complex and RHEB inactivation by TSC2. Monoubiquitinated at Lys-8 by RNF152, promoting its association with the TSC-TBC complex. Deubiquitinated at Lys-8 by USP4, promoting mTORC1 activation. In terms of processing, phosphorylation by MAPKAPK5 impairs GTP-binding and inactivation. Ubiquitous. Highest levels observed in skeletal and cardiac muscle.

It is found in the endomembrane system. Its subcellular location is the lysosome membrane. It localises to the golgi apparatus membrane. The protein localises to the endoplasmic reticulum membrane. The protein resides in the cytoplasm. It is found in the cytosol. The catalysed reaction is GTP + H2O = GDP + phosphate + H(+). With respect to regulation, alternates between an inactive form bound to GDP and an active form bound to GTP. Inactivated by the TSC-TBC complex via the GTPase activating protein (GAP) domain of TSC2. Autoinhibited by Tyr-35, which constrains the active site conformation, restricting the access of the catalytic Asp-65 to the nucleotide-binding pocket. Specifically inhibited by NR1 (4-bromo-6-(3,4-dichlorophenylthio)-1-(4-(dimethylcarbamoyl)benzyl)-1H-indole-2-carboxylic acid). Its function is as follows. Small GTPase that acts as an allosteric activator of the canonical mTORC1 complex, an evolutionarily conserved central nutrient sensor that stimulates anabolic reactions and macromolecule biosynthesis to promote cellular biomass generation and growth. In response to nutrients, growth factors or amino acids, specifically activates the protein kinase activity of MTOR, the catalytic component of the mTORC1 complex: acts by causing a conformational change that allows the alignment of residues in the active site of MTOR, thereby enhancing the phosphorylation of ribosomal protein S6 kinase (RPS6KB1 and RPS6KB2) and EIF4EBP1 (4E-BP1). RHEB is also required for localization of the TSC-TBC complex to lysosomal membranes. In response to starvation, RHEB is inactivated by the TSC-TBC complex, preventing activation of mTORC1. Has low intrinsic GTPase activity. In Homo sapiens (Human), this protein is GTP-binding protein Rheb.